The sequence spans 251 residues: Triosephosphate isomerase (251 aa).

A substrate-binding site is contributed by 9-11 (NWK). The Electrophile role is filled by His-95. Glu-167 acts as the Proton acceptor in catalysis. Residues Gly-173, Ser-213, and 234 to 235 (GG) each bind substrate.

The protein belongs to the triosephosphate isomerase family. In terms of assembly, homodimer.

The protein resides in the cytoplasm. The catalysed reaction is D-glyceraldehyde 3-phosphate = dihydroxyacetone phosphate. The protein operates within carbohydrate biosynthesis; gluconeogenesis. It functions in the pathway carbohydrate degradation; glycolysis; D-glyceraldehyde 3-phosphate from glycerone phosphate: step 1/1. Functionally, involved in the gluconeogenesis. Catalyzes stereospecifically the conversion of dihydroxyacetone phosphate (DHAP) to D-glyceraldehyde-3-phosphate (G3P). The sequence is that of Triosephosphate isomerase from Citrifermentans bemidjiense (strain ATCC BAA-1014 / DSM 16622 / JCM 12645 / Bem) (Geobacter bemidjiensis).